The chain runs to 715 residues: Fatty acid oxidation complex subunit alpha (715 aa).

Residues 1 to 190 (MIYEGKAITV…KVGAVDAVVA (190 aa)) are enoyl-CoA hydratase/isomerase. Substrate is bound at residue Asp297. The segment at 312–715 (KDVKQAAVLG…MAKNGQSFFG (404 aa)) is 3-hydroxyacyl-CoA dehydrogenase. NAD(+) contacts are provided by residues Met325, Asp344, 401–403 (VVE), Lys408, and Ser430. Catalysis depends on His451, which acts as the For 3-hydroxyacyl-CoA dehydrogenase activity. Asn454 is a binding site for NAD(+). Substrate-binding residues include Asn501 and Tyr660.

This sequence in the N-terminal section; belongs to the enoyl-CoA hydratase/isomerase family. The protein in the C-terminal section; belongs to the 3-hydroxyacyl-CoA dehydrogenase family. As to quaternary structure, heterotetramer of two alpha chains (FadB) and two beta chains (FadA).

The enzyme catalyses a (3S)-3-hydroxyacyl-CoA + NAD(+) = a 3-oxoacyl-CoA + NADH + H(+). It catalyses the reaction a (3S)-3-hydroxyacyl-CoA = a (2E)-enoyl-CoA + H2O. The catalysed reaction is a 4-saturated-(3S)-3-hydroxyacyl-CoA = a (3E)-enoyl-CoA + H2O. It carries out the reaction (3S)-3-hydroxybutanoyl-CoA = (3R)-3-hydroxybutanoyl-CoA. The enzyme catalyses a (3Z)-enoyl-CoA = a 4-saturated (2E)-enoyl-CoA. It catalyses the reaction a (3E)-enoyl-CoA = a 4-saturated (2E)-enoyl-CoA. The protein operates within lipid metabolism; fatty acid beta-oxidation. Its function is as follows. Involved in the aerobic and anaerobic degradation of long-chain fatty acids via beta-oxidation cycle. Catalyzes the formation of 3-oxoacyl-CoA from enoyl-CoA via L-3-hydroxyacyl-CoA. It can also use D-3-hydroxyacyl-CoA and cis-3-enoyl-CoA as substrate. In Pseudomonas fluorescens (strain ATCC BAA-477 / NRRL B-23932 / Pf-5), this protein is Fatty acid oxidation complex subunit alpha.